A 258-amino-acid polypeptide reads, in one-letter code: Acetylglutamate kinase (258 aa).

Residues 44-45 (GG), arginine 66, and asparagine 158 each bind substrate. ATP-binding positions include 181–186 (DVSGIL) and 209–211 (IIT).

This sequence belongs to the acetylglutamate kinase family. ArgB subfamily. In terms of assembly, homodimer.

It is found in the cytoplasm. It catalyses the reaction N-acetyl-L-glutamate + ATP = N-acetyl-L-glutamyl 5-phosphate + ADP. Its pathway is amino-acid biosynthesis; L-arginine biosynthesis; N(2)-acetyl-L-ornithine from L-glutamate: step 2/4. Catalyzes the ATP-dependent phosphorylation of N-acetyl-L-glutamate. This chain is Acetylglutamate kinase, found in Klebsiella pneumoniae subsp. pneumoniae (strain ATCC 700721 / MGH 78578).